Here is a 777-residue protein sequence, read N- to C-terminus: Subtilisin-like protease SBT3.7 (777 aa).

Positions 1–22 (MRNHRTSIFVVLSLVIILNGQS) are cleaved as a signal peptide. The propeptide at 23-113 (GFLPRAGAES…VIPDRFYKPA (91 aa)) is activation peptide. The region spanning 34 to 111 (VHIVYLGEKQ…VHVIPDRFYK (78 aa)) is the Inhibitor I9 domain. One can recognise a Peptidase S8 domain in the interval 117 to 624 (TWDYLGLSPT…GGLVNPEKAT (508 aa)). N-linked (GlcNAc...) asparagine glycosylation is present at Asn-133. Asp-147 functions as the Charge relay system in the catalytic mechanism. Asn-180 and Asn-206 each carry an N-linked (GlcNAc...) asparagine glycan. His-222 serves as the catalytic Charge relay system. N-linked (GlcNAc...) asparagine glycans are attached at residues Asn-237, Asn-397, Asn-412, and Asn-540. The PA domain maps to 386–481 (SLVYPENPGN…ELGTYILFYI (96 aa)). Ser-555 acts as the Charge relay system in catalysis. N-linked (GlcNAc...) asparagine glycosylation is found at Asn-647, Asn-723, and Asn-758.

Belongs to the peptidase S8 family.

The protein resides in the secreted. The polypeptide is Subtilisin-like protease SBT3.7 (Arabidopsis thaliana (Mouse-ear cress)).